The primary structure comprises 876 residues: Alanine--tRNA ligase (876 aa).

Zn(2+) is bound by residues H563, H567, C665, and H669.

It belongs to the class-II aminoacyl-tRNA synthetase family. Requires Zn(2+) as cofactor.

It localises to the cytoplasm. The catalysed reaction is tRNA(Ala) + L-alanine + ATP = L-alanyl-tRNA(Ala) + AMP + diphosphate. Functionally, catalyzes the attachment of alanine to tRNA(Ala) in a two-step reaction: alanine is first activated by ATP to form Ala-AMP and then transferred to the acceptor end of tRNA(Ala). Also edits incorrectly charged Ser-tRNA(Ala) and Gly-tRNA(Ala) via its editing domain. The protein is Alanine--tRNA ligase of Shouchella clausii (strain KSM-K16) (Alkalihalobacillus clausii).